Reading from the N-terminus, the 227-residue chain is Acyl-protein thioesterase 1 (227 aa).

Catalysis depends on charge relay system residues S119, D173, and H207.

The protein belongs to the AB hydrolase superfamily. AB hydrolase 2 family.

The protein resides in the cytoplasm. Its subcellular location is the nucleus. It carries out the reaction S-hexadecanoyl-L-cysteinyl-[protein] + H2O = L-cysteinyl-[protein] + hexadecanoate + H(+). Its function is as follows. Hydrolyzes fatty acids from S-acylated cysteine residues in proteins with a strong preference for palmitoylated G-alpha proteins over other acyl substrates. Mediates the deacylation of G-alpha proteins such as GPA1 in vivo, but has weak or no activity toward palmitoylated Ras proteins. Has weak lysophospholipase activity in vitro; however such activity may not exist in vivo. This is Acyl-protein thioesterase 1 from Saccharomyces cerevisiae (strain ATCC 204508 / S288c) (Baker's yeast).